The chain runs to 336 residues: MEKLFIPKDYKPLLSLRETEVAIKELKDFFEDSLAKNLNLTRVSAPLFVNKGSGLNDDLNGIERPVSFDMKAIPEFNIQIVHSLAKWKRLALHRYEFKHGEGLYTDMNAIRRDEDLDNIHSIYVDQWDWEKIIDKEERNLETLKETVRSIYSTFKATEDFIVSKYPHIEKILPEDITFITSQELEDRYPDLTSKERETAICKEFGAVFIIGIGGKLASGEKHDDRSPDYDDWTLNGDLLFYYPLFDEAVELSSMGIRVDEESLLKQLKIAECEERKELPFHQMLLEGKLPYTIGGGIGQSRICMFFLRKAHIGEVQASMWDEDMIRTCEENNIHLL.

Belongs to the class-II aminoacyl-tRNA synthetase family. AsnA subfamily.

It is found in the cytoplasm. It catalyses the reaction L-aspartate + NH4(+) + ATP = L-asparagine + AMP + diphosphate + H(+). Its pathway is amino-acid biosynthesis; L-asparagine biosynthesis; L-asparagine from L-aspartate (ammonia route): step 1/1. This chain is Aspartate--ammonia ligase, found in Clostridium perfringens (strain SM101 / Type A).